Reading from the N-terminus, the 246-residue chain is MIVLKITSIGADISDNDTSCSRELIASLEASIPGLLDAGAESAALTNITGDDVVISAFVEDDMLETVNRAIVEILRDSSESLGDLEGISDEPDGAGEGISYAEAAVRQDRYPDAVILAFDTYGGEDFVADVANSAIAAARGMDGVTDVSQEIRPGVREIPGVGYVSDKTDDPVVAATIEDIESVGVAAGAMLGAALGHKNVHLVRRGSPSYVIPGSVIVSATAFLNGNLIDLAVPFEERTRILRVL.

The protein to M.jannaschii MJ1676.

This is an uncharacterized protein from Methanothermobacter thermautotrophicus (strain ATCC 29096 / DSM 1053 / JCM 10044 / NBRC 100330 / Delta H) (Methanobacterium thermoautotrophicum).